The chain runs to 480 residues: V-type ATP synthase beta chain 2 (480 aa).

The protein belongs to the ATPase alpha/beta chains family.

Its function is as follows. Produces ATP from ADP in the presence of a proton gradient across the membrane. The V-type beta chain is a regulatory subunit. The polypeptide is V-type ATP synthase beta chain 2 (atpB2) (Treponema pallidum (strain Nichols)).